The chain runs to 280 residues: Putative ABC transporter ATP-binding protein MTH_133 (280 aa).

The ABC transporter domain maps to I6–R241. Residue G39–S46 coordinates ATP.

Belongs to the ABC transporter superfamily.

It localises to the cell membrane. Its function is as follows. Probably part of an ABC transporter complex. Responsible for energy coupling to the transport system. In Methanothermobacter thermautotrophicus (strain ATCC 29096 / DSM 1053 / JCM 10044 / NBRC 100330 / Delta H) (Methanobacterium thermoautotrophicum), this protein is Putative ABC transporter ATP-binding protein MTH_133.